A 211-amino-acid polypeptide reads, in one-letter code: Protein-L-isoaspartate O-methyltransferase (211 aa).

S62 is a catalytic residue.

Belongs to the methyltransferase superfamily. L-isoaspartyl/D-aspartyl protein methyltransferase family.

It is found in the cytoplasm. The enzyme catalyses [protein]-L-isoaspartate + S-adenosyl-L-methionine = [protein]-L-isoaspartate alpha-methyl ester + S-adenosyl-L-homocysteine. Catalyzes the methyl esterification of L-isoaspartyl residues in peptides and proteins that result from spontaneous decomposition of normal L-aspartyl and L-asparaginyl residues. It plays a role in the repair and/or degradation of damaged proteins. The polypeptide is Protein-L-isoaspartate O-methyltransferase (Shewanella halifaxensis (strain HAW-EB4)).